The chain runs to 344 residues: Methionine import ATP-binding protein MetN 1 (344 aa).

Positions I2–I241 constitute an ABC transporter domain. G38–S45 provides a ligand contact to ATP.

This sequence belongs to the ABC transporter superfamily. Methionine importer (TC 3.A.1.24) family. As to quaternary structure, the complex is composed of two ATP-binding proteins (MetN), two transmembrane proteins (MetI) and a solute-binding protein (MetQ).

It is found in the cell inner membrane. It catalyses the reaction L-methionine(out) + ATP + H2O = L-methionine(in) + ADP + phosphate + H(+). The enzyme catalyses D-methionine(out) + ATP + H2O = D-methionine(in) + ADP + phosphate + H(+). Its function is as follows. Part of the ABC transporter complex MetNIQ involved in methionine import. Responsible for energy coupling to the transport system. The sequence is that of Methionine import ATP-binding protein MetN 1 from Burkholderia lata (strain ATCC 17760 / DSM 23089 / LMG 22485 / NCIMB 9086 / R18194 / 383).